The chain runs to 286 residues: Polyamine aminopropyltransferase (286 aa).

The PABS domain maps to 5 to 238 (PLWHETLHDH…GIMTFAWASD (234 aa)). Glutamine 33 is a binding site for S-methyl-5'-thioadenosine. 2 residues coordinate spermidine: histidine 64 and aspartate 88. S-methyl-5'-thioadenosine is bound by residues glutamate 108 and 140–141 (DG). Aspartate 158 (proton acceptor) is an active-site residue. Position 158–161 (158–161 (DCTD)) interacts with spermidine. Proline 165 provides a ligand contact to S-methyl-5'-thioadenosine.

It belongs to the spermidine/spermine synthase family. Homodimer or homotetramer.

It localises to the cytoplasm. The catalysed reaction is S-adenosyl 3-(methylsulfanyl)propylamine + putrescine = S-methyl-5'-thioadenosine + spermidine + H(+). It participates in amine and polyamine biosynthesis; spermidine biosynthesis; spermidine from putrescine: step 1/1. Functionally, catalyzes the irreversible transfer of a propylamine group from the amino donor S-adenosylmethioninamine (decarboxy-AdoMet) to putrescine (1,4-diaminobutane) to yield spermidine. The sequence is that of Polyamine aminopropyltransferase from Klebsiella pneumoniae (strain 342).